The primary structure comprises 117 residues: MQKSCEENEGKPQNMPKAEEDRPLEDVPQEAEGNPQPSEEGVSQEAEGNPRGGPNQPGQGFKEDTPVRHLDPEEMIRGVDELERLREEIRRVRNKFVMMHWKQRHSRSRPYPVCFRP.

Basic and acidic residues-rich tracts occupy residues 1–10 (MQKSCEENEG) and 61–75 (FKEDTPVRHLDPEEM). The tract at residues 1–75 (MQKSCEENEG…PVRHLDPEEM (75 aa)) is disordered. Residues 73-100 (EEMIRGVDELERLREEIRRVRNKFVMMH) adopt a coiled-coil conformation.

It belongs to the TFS-II family. TFA subfamily.

It is found in the nucleus. Functionally, may be involved in transcriptional regulation. In Homo sapiens (Human), this protein is Transcription elongation factor A protein-like 8 (TCEAL8).